The primary structure comprises 151 residues: Small ribosomal subunit protein uS13 (151 aa).

The protein belongs to the universal ribosomal protein uS13 family. In terms of assembly, part of the 30S ribosomal subunit. Forms a loose heterodimer with protein S19. Forms two bridges to the 50S subunit in the 70S ribosome.

In terms of biological role, located at the top of the head of the 30S subunit, it contacts several helices of the 16S rRNA. In the 70S ribosome it contacts the 23S rRNA (bridge B1a) and protein L5 of the 50S subunit (bridge B1b), connecting the 2 subunits; these bridges are implicated in subunit movement. The sequence is that of Small ribosomal subunit protein uS13 from Hyperthermus butylicus (strain DSM 5456 / JCM 9403 / PLM1-5).